We begin with the raw amino-acid sequence, 124 residues long: Ribosome-binding factor A (124 aa).

The protein belongs to the RbfA family. Monomer. Binds 30S ribosomal subunits, but not 50S ribosomal subunits or 70S ribosomes.

It localises to the cytoplasm. Functionally, one of several proteins that assist in the late maturation steps of the functional core of the 30S ribosomal subunit. Associates with free 30S ribosomal subunits (but not with 30S subunits that are part of 70S ribosomes or polysomes). Required for efficient processing of 16S rRNA. May interact with the 5'-terminal helix region of 16S rRNA. In Thiobacillus denitrificans (strain ATCC 25259 / T1), this protein is Ribosome-binding factor A.